The sequence spans 492 residues: High-affinity nickel transport protein (492 aa).

Over 1 to 24 (MLSRWTRRVNESRLAQRKLTLLGR) the chain is Cytoplasmic. The chain crosses the membrane as a helical span at residues 25–45 (AIALVVGELLFNAVCWIAAGI). Residues 46-50 (CFGKT) are Extracellular-facing. A helical transmembrane segment spans residues 51 to 71 (DGILGLALLAWTIGLRHGLDA). The Cytoplasmic segment spans residues 72–94 (DHISAIDNATRQLVSQGQLPITC). The helical transmembrane segment at 95–115 (GLFFSLGHSTIVIVVNVAIAV) threads the bilayer. At 116–136 (SVDIYDKLDRVGSIGGIVGAA) the chain is on the extracellular side. The helical transmembrane segment at 137 to 157 (VSASFLFLIACLNIYFLVGAI) threads the bilayer. Over 158 to 210 (KQRRSMKRRQALGLPPDEDEGDPSKIYGGGCMVRVVGPILRAVDRPWKMYPVG) the chain is Cytoplasmic. A helical transmembrane segment spans residues 211–231 (VLFGFGFDTASSIALLAISAI). Topologically, residues 232 to 239 (AQRGPNGD) are extracellular. The chain crosses the membrane as a helical span at residues 240–260 (AISHGKIVILPFLFTAGMSLV). The Cytoplasmic segment spans residues 261–382 (DSLDSILMLY…AKANTMSSLS (122 aa)). Residues 383–403 (IILTLLSILVALSISLIEIMG) form a helical membrane-spanning segment. Over 404-439 (LIGDNCTQCQDAANDPDGGGLAGSWWRAWARANDQS) the chain is Extracellular. N-linked (GlcNAc...) asparagine glycosylation is present at asparagine 408. The chain crosses the membrane as a helical span at residues 440-460 (GYIGAAIVGCFAAILAGWYGA). Residues 461–492 (KWGKKKWKARRDANAAIVLEDNEDDAAETPVA) are Cytoplasmic-facing.

The protein belongs to the NiCoT transporter (TC 2.A.52) family.

Its subcellular location is the cell membrane. High-affinity nickel-specific transporter responsible for nickel uptake and required for high levels of activity of urease URE1. Does not transport cobalt. Plays a role in host brain invasion. The sequence is that of High-affinity nickel transport protein from Cryptococcus neoformans var. grubii serotype A (strain H99 / ATCC 208821 / CBS 10515 / FGSC 9487) (Filobasidiella neoformans var. grubii).